The chain runs to 459 residues: Cysteine--tRNA ligase (459 aa).

Cysteine 29 is a Zn(2+) binding site. Positions 31–41 (PTVYDRAHIGN) match the 'HIGH' region motif. Zn(2+)-binding residues include cysteine 209, histidine 234, and glutamate 238. Residues 266-270 (KMSKS) carry the 'KMSKS' region motif. Residue lysine 269 coordinates ATP.

Belongs to the class-I aminoacyl-tRNA synthetase family. Monomer. Zn(2+) is required as a cofactor.

Its subcellular location is the cytoplasm. The enzyme catalyses tRNA(Cys) + L-cysteine + ATP = L-cysteinyl-tRNA(Cys) + AMP + diphosphate. In Paramagnetospirillum magneticum (strain ATCC 700264 / AMB-1) (Magnetospirillum magneticum), this protein is Cysteine--tRNA ligase.